Reading from the N-terminus, the 345-residue chain is Heat-inducible transcription repressor HrcA (345 aa).

It belongs to the HrcA family.

Its function is as follows. Negative regulator of class I heat shock genes (grpE-dnaK-dnaJ and groELS operons). Prevents heat-shock induction of these operons. This is Heat-inducible transcription repressor HrcA from Listeria monocytogenes serotype 1/2a (strain 10403S).